Here is a 189-residue protein sequence, read N- to C-terminus: GTP cyclohydrolase 1 (189 aa).

Residues Cys78, His81, and Cys150 each coordinate Zn(2+).

Belongs to the GTP cyclohydrolase I family. In terms of assembly, homomer.

It carries out the reaction GTP + H2O = 7,8-dihydroneopterin 3'-triphosphate + formate + H(+). It functions in the pathway cofactor biosynthesis; 7,8-dihydroneopterin triphosphate biosynthesis; 7,8-dihydroneopterin triphosphate from GTP: step 1/1. The sequence is that of GTP cyclohydrolase 1 from Bacillus cytotoxicus (strain DSM 22905 / CIP 110041 / 391-98 / NVH 391-98).